The chain runs to 318 residues: Vomeronasal type-1 receptor 45 (318 aa).

Residues 1-32 lie on the Extracellular side of the membrane; the sequence is MSEILFFSPQPLFSHMMNKNSRLHTHSNIKNT. Residues 33 to 53 traverse the membrane as a helical segment; it reads FFSEIGIGILGNSFLLLFHIL. Residues 54-65 are Cytoplasmic-facing; it reads KFIRGHRLRLTD. Residues 66–86 form a helical membrane-spanning segment; the sequence is LPIGLLSLIHLLMLLLMAFIA. Residues 87-109 are Extracellular-facing; the sequence is TDIFISRRGWDDIICKFLVYLYR. Cys101 and Cys188 are disulfide-bonded. Residues 110–130 form a helical membrane-spanning segment; the sequence is VLRGLSLCTTSMLSVLQAIIL. The Cytoplasmic portion of the chain corresponds to 131-150; that stretch reads SPRSSCLAKLKHKYPHHISC. Residues 151–171 traverse the membrane as a helical segment; that stretch reads AIIFLSVLYMLISSHILLSII. Topologically, residues 172–206 are extracellular; sequence ATPNLTRNDFLYVTQSCSILPLSYVMQSMYSTLLA. N-linked (GlcNAc...) asparagine glycosylation is present at Asn175. A helical transmembrane segment spans residues 207 to 227; it reads LREVFLISLMVLSTLYMVVLL. Topologically, residues 228–254 are cytoplasmic; the sequence is CRHRKQAQHLQGTSLSPKASAEQRATQ. A helical membrane pass occupies residues 255–275; the sequence is TILMLMTFFVLMSIFDSIVSC. Residues 276 to 285 are Extracellular-facing; the sequence is SRTMFLDDPT. Residues 286–306 traverse the membrane as a helical segment; sequence SYSIHIFVMHIYATVSPFVFM. At 307–318 the chain is on the cytoplasmic side; the sequence is STEKHIVNILRG.

This sequence belongs to the G-protein coupled receptor 1 family. As to expression, expressed in a subset of sensory neurons located in the apical layer of the vomeronasal organ.

It is found in the cell membrane. Putative pheromone receptor implicated in the regulation of social and reproductive behavior. The chain is Vomeronasal type-1 receptor 45 (Vmn1r45) from Mus musculus (Mouse).